The primary structure comprises 132 residues: U-scoloptoxin(11)-Sa1a (132 aa).

An N-terminal signal peptide occupies residues 1–19; that stretch reads MIRFFAFVLFFATQELILC.

It belongs to the scoloptoxin-11 family. Post-translationally, contains 5 disulfide bonds. Expressed by the venom gland.

The protein localises to the secreted. The sequence is that of U-scoloptoxin(11)-Sa1a from Scolopendra alternans (Florida Keys giant centipede).